Consider the following 463-residue polypeptide: Annexin A7 (463 aa).

A compositionally biased stretch (pro residues) spans 1-18; sequence MSYPGYPPTGYPPFPGYP. Disordered stretches follow at residues 1 to 34 and 77 to 149; these read MSYPGYPPTGYPPFPGYPPAGQESSFPTAGQYPY and SPGG…MTQG. Residues 1-143 form a repeat-rich region region; it reads MSYPGYPPTG…GGQAPYPSQP (143 aa). The segment at 5-20 is 3 X 5 AA tandem repeats of G-Y-P-P-X; sequence GYPPTGYPPFPGYPPA. A compositionally biased stretch (gly residues) spans 86-99; the sequence is GGQGFGAPPGGAGF. 4 Annexin repeats span residues 160–231, 232–303, 315–387, and 391–462; these read FDAM…ALFM, PSTY…SMCQ, QMAQ…TILQ, and NRPA…AIVG. Residue lysine 208 is modified to N6-acetyllysine.

The protein belongs to the annexin family. Interacts with PDCD6.

In terms of biological role, calcium/phospholipid-binding protein which promotes membrane fusion and is involved in exocytosis. The chain is Annexin A7 (Anxa7) from Mus musculus (Mouse).